We begin with the raw amino-acid sequence, 288 residues long: Threonine-rich protein (288 aa).

The N-terminal stretch at 1 to 20 (MKAFLLSLATLLACIVLTES) is a signal peptide. The segment covering 141-150 (TTVTPQTTDG) has biased composition (polar residues). The segment at 141 to 260 (TTVTPQTTDG…PAPTTTPAPT (120 aa)) is disordered. The span at 151–253 (NTTTEAPTST…TAAPTTTPAP (103 aa)) shows a compositional bias: low complexity.

In terms of tissue distribution, component of the acid-insoluble and acid-soluble organic matrix of the aragonitic skeleton (at protein level).

It is found in the secreted. This Acropora millepora (Staghorn coral) protein is Threonine-rich protein.